The primary structure comprises 79 residues: Cell division protein ZapB (79 aa).

Residues 4 to 78 are a coiled coil; that stretch reads EVFEKLEAKV…LRALLGKMEE (75 aa).

The protein belongs to the ZapB family. As to quaternary structure, homodimer. The ends of the coiled-coil dimer bind to each other, forming polymers. Interacts with FtsZ.

Its subcellular location is the cytoplasm. Functionally, non-essential, abundant cell division factor that is required for proper Z-ring formation. It is recruited early to the divisome by direct interaction with FtsZ, stimulating Z-ring assembly and thereby promoting cell division earlier in the cell cycle. Its recruitment to the Z-ring requires functional FtsA or ZipA. This Pectobacterium carotovorum subsp. carotovorum (strain PC1) protein is Cell division protein ZapB.